The following is a 231-amino-acid chain: Fibronectin type III domain-containing protein 4 (231 aa).

The N-terminal stretch at 1-40 is a signal peptide; that stretch reads MPLAPPANSVETMASLMPLSPYLSPTVLLLVSCDLGFVRA. The Extracellular portion of the chain corresponds to 41–163; that stretch reads DRPPSPVNVT…GLDGERPLQT (123 aa). One can recognise a Fibronectin type-III domain in the interval 43–136; the sequence is PPSPVNVTVT…PRVHFRTLKG (94 aa). N48 and N143 each carry an N-linked (GlcNAc...) asparagine glycan. Positions 118-156 are disordered; sequence GLRGESPPGPRVHFRTLKGSDRLPSNSSSPGDITVEGLD. Residues 164–184 traverse the membrane as a helical segment; sequence GEVVIIVVVLLMWAAVIGLFC. Topologically, residues 185–231 are cytoplasmic; sequence RQYDIIKDNDSNNNPKEKGKGPEQSPQGRPVGTTRQKKSPSINTIDV. Over residues 193–205 the composition is skewed to basic and acidic residues; the sequence is NDSNNNPKEKGKG. The segment at 193–231 is disordered; that stretch reads NDSNNNPKEKGKGPEQSPQGRPVGTTRQKKSPSINTIDV.

In terms of tissue distribution, predominantly expressed in the liver and in the brain, including in the cortex, hypothalamus and hippocampus. Also expressed in heart, lung, kidney and testis. In the colon, expressed in the epithelium and in a subset of immune cells in lymphoid aggregates.

It is found in the membrane. The protein localises to the secreted. Has anti-inflammatory properties. In the colon, acts on macrophages to down-regulate inflammation. May suppress osteoclastogenesis and mature osteoclast resorptive function. In white adipose tissue, decreases local inflammation, via interaction with GPR116. Also required for proper systemic glucose tolerance, specifically sensitizing white adipocytes to insulin and promoting glucose uptake. The insulin sensitizing function in adipose tissue is mediated by interaction with ADGRF5/GPR116 and activation of cAMP signaling. The sequence is that of Fibronectin type III domain-containing protein 4 (Fndc4) from Mus musculus (Mouse).